The following is a 196-amino-acid chain: Crossover junction endodeoxyribonuclease RuvC (196 aa).

Active-site residues include D19, E80, and D153. Residues D19, E80, and D153 each coordinate Mg(2+).

It belongs to the RuvC family. In terms of assembly, homodimer which binds Holliday junction (HJ) DNA. The HJ becomes 2-fold symmetrical on binding to RuvC with unstacked arms; it has a different conformation from HJ DNA in complex with RuvA. In the full resolvosome a probable DNA-RuvA(4)-RuvB(12)-RuvC(2) complex forms which resolves the HJ. Mg(2+) is required as a cofactor.

The protein localises to the cytoplasm. It catalyses the reaction Endonucleolytic cleavage at a junction such as a reciprocal single-stranded crossover between two homologous DNA duplexes (Holliday junction).. In terms of biological role, the RuvA-RuvB-RuvC complex processes Holliday junction (HJ) DNA during genetic recombination and DNA repair. Endonuclease that resolves HJ intermediates. Cleaves cruciform DNA by making single-stranded nicks across the HJ at symmetrical positions within the homologous arms, yielding a 5'-phosphate and a 3'-hydroxyl group; requires a central core of homology in the junction. The consensus cleavage sequence is 5'-(A/T)TT(C/G)-3'. Cleavage occurs on the 3'-side of the TT dinucleotide at the point of strand exchange. HJ branch migration catalyzed by RuvA-RuvB allows RuvC to scan DNA until it finds its consensus sequence, where it cleaves and resolves the cruciform DNA. This is Crossover junction endodeoxyribonuclease RuvC from Cutibacterium acnes (strain DSM 16379 / KPA171202) (Propionibacterium acnes).